Here is a 101-residue protein sequence, read N- to C-terminus: Urease subunit beta 1 (101 aa).

The protein belongs to the urease beta subunit family. As to quaternary structure, heterotrimer of UreA (gamma), UreB (beta) and UreC (alpha) subunits. Three heterotrimers associate to form the active enzyme.

The protein localises to the cytoplasm. It catalyses the reaction urea + 2 H2O + H(+) = hydrogencarbonate + 2 NH4(+). It participates in nitrogen metabolism; urea degradation; CO(2) and NH(3) from urea (urease route): step 1/1. Disruption of the ure1 gene cluster suggests that it protects brucellae during their passage through the stomach. The major route of infection in human brucellosis is oral. In Brucella abortus (strain 2308), this protein is Urease subunit beta 1.